Consider the following 1046-residue polypeptide: Arrestin-related trafficking adapter 3 (1046 aa).

The disordered stretch occupies residues 115-141; the sequence is YPPTEQKSKKKMDASAPNESNNAANNF. The segment covering 128–140 has biased composition (low complexity); it reads ASAPNESNNAANN. A phosphoserine mark is found at Ser-155 and Ser-162. Composition is skewed to low complexity over residues 168-179 and 198-210; these read SGLSSLNLSPLG and RSSS…GPSR. Residues 168–230 form a disordered region; that stretch reads SGLSSLNLSP…ATSPSVSHHN (63 aa). Phosphoserine occurs at positions 213 and 586. Residues 605-614 are compositionally biased toward polar residues; sequence TRNSRQFNRN. Disordered stretches follow at residues 605–627 and 651–820; these read TRNS…IFNS and PLSP…FAHS. Over residues 669 to 694 the composition is skewed to low complexity; that stretch reads FDFSSDFISDAASGTTTTEVSSSESS. Residues 734–785 show a composition bias toward basic and acidic residues; that stretch reads KNSDKNSSETLNKKESMSKIEENKHKRETTPKKRENRDVKSLSTPQREESKD. Residues 802 to 811 are compositionally biased toward low complexity; sequence LSLSSSLHSS. Residues Ser-826 and Ser-838 each carry the phosphoserine modification. The tract at residues 868 to 889 is disordered; the sequence is NHDKNELNRHSTNTSSTPASAR. Over residues 877 to 889 the composition is skewed to polar residues; that stretch reads HSTNTSSTPASAR. Ser-900 is modified (phosphoserine). A disordered region spans residues 986–1017; that stretch reads QNSAESDHNNDIFTQGSGLTESSKNSDSEERF. Residues 996–1008 are compositionally biased toward polar residues; sequence DIFTQGSGLTESS. A phosphoserine mark is found at Ser-1022 and Ser-1023.

The protein belongs to the ALY1 family. Interacts with PCL6, PCL7 and RSP5. In terms of processing, ubiquitinated by RSP5. Post-translationally, phosphorylated by the cyclin-CDKs PCL6-PHO85 and PCL7-PHO85.

Its subcellular location is the cytoplasm. May regulate endocytosis by recruiting RSP5 ubiquitin ligase activity to specific plasma membrane proteins in response to extracellular stimuli. This is Arrestin-related trafficking adapter 3 (ALY2) from Saccharomyces cerevisiae (strain ATCC 204508 / S288c) (Baker's yeast).